Consider the following 196-residue polypeptide: Calcium channel flower (196 aa).

Transmembrane regions (helical) follow at residues 36 to 56 (LGIVAAFFAILFGLWNVLSII), 67 to 89 (IIQMLAGFVVMALEAPCCFICIE), and 114 to 134 (AVPPIFMCFGLASLFGSGLIF).

Belongs to the calcium channel flower family. In terms of assembly, homomultimer. Associates with the dally/ magu complex.

It is found in the cell membrane. The protein localises to the cytoplasmic vesicle. Its subcellular location is the secretory vesicle. It localises to the synaptic vesicle membrane. The protein resides in the presynaptic cell membrane. It is found in the endosome. Channel activity is inhibited by La(3+), which reduces Ca(2+) influx and thus inhibits it's function in promoting activity-dependent bulk endocytosis (ADBE) in response to high stimuli. Its function is as follows. Transmembrane protein which mediates synaptic endocytosis, fitness-based cell culling, neuronal culling, morphogen gradient scaling, and calcium transport. Regulates synaptic endocytosis and hence couples exo- with endocytosis. Controls two major modes of synaptic vesicle (SV) endocytosis in the synaptic boutons of neuromuscular junctions (NMJs); Ca(2+) channel-independent Clathrin-mediated endocytosis (CME) in response to mild stimulation, and Ca(2+) channel-dependent activity-dependent bulk endocytosis (ADBE) in response to strong stimulation. Functions in ADBE and subsequent SV reformation from bulk endosomes by initiating Ca(2+) channel-dependent phosphatidylinositol 4,5-bisphosphate (PtdIns(4,5)P2) compartmentalization in synaptic boutons. There it acts at the periactive zone to provide the low Ca(2+) levels required to initiate Calcineurin activation and upregulate PtdIns(4,5)P2. Conversely PtdIns(4,5)P2 enhances fwe Ca(2+) channel-activity, establishing a positive feedback loop that induces PtdIns(4,5)P2 microdomain at the periactive zone. These microdomains trigger bulk membrane invagination (i.e. ADBE) by triggering actin polymerization while also promoting localization of fwe to bulk endosomes, thereby removing the ADBE trigger to reduce endocytosis and prevent excess membrane uptake. PtdIns(4,5)P2 then promotes SV reformation from the bulk endosomes, to coordinate ADBE and subsequent SV reformation. Different combinations of the flower isoforms at the cell membrane are also required for the identification and elimination of suboptimal or supernumerary cells during development, regeneration, and adulthood. Required for the recognition and elimination of unfit cells in the developing wing during cell competition. In the developing pupal retina, mediates the elimination of unwanted postmitotic neurons, including supernumerary photoreceptor neurons that form at the periphery of the retina and are contained within incomplete ommatidia units. Also required for efficient elimination and replacement of old neurons by newly generated neurons during regeneration in the adult brain following mechanical injury. Downstream of the flower fitness fingerprints, cells identified as unwanted or unfit are eliminated via apoptosis through the expression of ahuizotl (azot). However, the cells marked for elimination by the flower isoforms only undergo apoptosis if additional thresholds are met; (1) their neighboring fit/healthy cells express different levels of the fwe isoforms, and (2) the levels of the protective signal SPARC expressed by the loser or unwanted cells are unable to inhibit caspase activation. These additional thresholds for flower-mediated apoptosis, allows useful cells to recover from transient and limited stress before they are unnecessarily eliminated. Functions with dally and magu in a mechanism of scaling, which utilises apoptosis to ensure that the dpp morphogen gradient, which mediates organ growth, remains proportional to the size of the growing wing. In this mechanism, fwe represses dally- and Magu-dependent activity in expanding the gradient, and dally/Magu inhibits fwe-dependent apoptosis to keep cell death rate low. When the levels of these different proteins are optimally regulated the gradient correctly scales with organ growth but when this fails, fwe-mediated apoptosis is activated to trim the developing tissue to match the correct size of the gradient. In Drosophila virilis (Fruit fly), this protein is Calcium channel flower.